We begin with the raw amino-acid sequence, 501 residues long: Cytochrome P450 2S1 (501 aa).

Position 441 (C441) interacts with heme.

This sequence belongs to the cytochrome P450 family. It depends on heme as a cofactor.

The protein resides in the endoplasmic reticulum membrane. It is found in the microsome membrane. The enzyme catalyses all-trans-retinoate + reduced [NADPH--hemoprotein reductase] + O2 = all-trans-5,6-epoxyretinoate + oxidized [NADPH--hemoprotein reductase] + H2O + H(+). It catalyses the reaction all-trans-retinoate + reduced [NADPH--hemoprotein reductase] + O2 = all-trans-4-hydroxyretinoate + oxidized [NADPH--hemoprotein reductase] + H2O + H(+). The catalysed reaction is (5S)-hydroperoxy-(6E,8Z,11Z,14Z)-eicosatetraenoate = 5-oxo-(6E,8Z,11Z,14Z)-eicosatetraenoate + H2O. It carries out the reaction (12S)-hydroperoxy-(5Z,8Z,10E,14Z)-eicosatetraenoate = 12-oxo-(5Z,8Z,10E,14Z)-eicosatetraenoate + H2O. The enzyme catalyses (15S)-hydroperoxy-(5Z,8Z,11Z,13E)-eicosatetraenoate = 15-oxo-(5Z,8Z,11Z,13E)-eicosatetraenoate + H2O. It catalyses the reaction prostaglandin H2 = thromboxane A2. The catalysed reaction is prostaglandin H2 = (12S)-hydroxy-(5Z,8E,10E)-heptadecatrienoate + malonaldehyde. It carries out the reaction (13S)-hydroperoxy-(9Z,11E)-octadecadienoate = 13-oxo-(9Z,11E)-octadecadienoate + H2O. The protein operates within lipid metabolism; fatty acid metabolism. A cytochrome P450 monooxygenase involved in the metabolism of retinoids and eicosanoids. In epidermis, may contribute to the oxidative metabolism of all-trans-retinoic acid. For this activity, uses molecular oxygen inserting one oxygen atom into a substrate, and reducing the second into a water molecule, with two electrons provided by NADPH via cytochrome P450 reductase (NADPH--hemoprotein reductase). Additionally, displays peroxidase and isomerase activities toward various oxygenated eicosanoids such as prostaglandin H2 (PGH2) and hydroperoxyeicosatetraenoates (HPETEs). Independently of cytochrome P450 reductase, NADPH, and O2, catalyzes the breakdown of PGH2 to hydroxyheptadecatrienoic acid (HHT) and malondialdehyde (MDA), which is known to act as a mediator of DNA damage. This Mus musculus (Mouse) protein is Cytochrome P450 2S1 (Cyp2s1).